The following is a 126-amino-acid chain: Fluoride-specific ion channel FluC 2 (126 aa).

Transmembrane regions (helical) follow at residues 7–27 (MWVGLGGGIGSLLRWWIGLSI), 37–57 (LGTFLINISGAFVIGYLSILF), 65–85 (YGDLMNAAVLTGILGGYTTFS), and 101–121 (AIAAGYLIISVLVGLAAAAFG). Positions 79 and 82 each coordinate Na(+).

The protein belongs to the fluoride channel Fluc/FEX (TC 1.A.43) family.

The protein localises to the cell inner membrane. It carries out the reaction fluoride(in) = fluoride(out). Its activity is regulated as follows. Na(+) is not transported, but it plays an essential structural role and its presence is essential for fluoride channel function. Functionally, fluoride-specific ion channel. Important for reducing fluoride concentration in the cell, thus reducing its toxicity. The chain is Fluoride-specific ion channel FluC 2 from Yersinia pseudotuberculosis serotype I (strain IP32953).